Consider the following 175-residue polypeptide: Glutamyl-tRNA(Gln) amidotransferase subunit C, mitochondrial (175 aa).

Belongs to the GatC family. In terms of assembly, subunit of the heterotrimeric GatCAB amidotransferase (AdT) complex, composed of A, B and C subunits.

Its subcellular location is the mitochondrion. The catalysed reaction is L-glutamyl-tRNA(Gln) + L-glutamine + ATP + H2O = L-glutaminyl-tRNA(Gln) + L-glutamate + ADP + phosphate + H(+). Its function is as follows. Allows the formation of correctly charged Gln-tRNA(Gln) through the transamidation of misacylated Glu-tRNA(Gln) in the mitochondria. The reaction takes place in the presence of glutamine and ATP through an activated gamma-phospho-Glu-tRNA(Gln). The protein is Glutamyl-tRNA(Gln) amidotransferase subunit C, mitochondrial of Caenorhabditis elegans.